A 299-amino-acid polypeptide reads, in one-letter code: Glutamyl-Q tRNA(Asp) synthetase (299 aa).

L-glutamate-binding positions include 9–13 and E45; that span reads RFAPS. The 'HIGH' region signature appears at 12 to 22; that stretch reads PSPTGPLHFGS. The Zn(2+) site is built by C101, C103, and C118. The L-glutamate site is built by Y170 and R188. The 'KMSKS' region signature appears at 226-230; the sequence is KLSKS. K229 serves as a coordination point for ATP.

It belongs to the class-I aminoacyl-tRNA synthetase family. GluQ subfamily. Zn(2+) is required as a cofactor.

Functionally, catalyzes the tRNA-independent activation of glutamate in presence of ATP and the subsequent transfer of glutamate onto a tRNA(Asp). Glutamate is transferred on the 2-amino-5-(4,5-dihydroxy-2-cyclopenten-1-yl) moiety of the queuosine in the wobble position of the QUC anticodon. The chain is Glutamyl-Q tRNA(Asp) synthetase from Xanthomonas axonopodis pv. citri (strain 306).